We begin with the raw amino-acid sequence, 345 residues long: Viral Fc-gamma receptor-like protein UL119 (345 aa).

An N-terminal signal peptide occupies residues 1–23; it reads MCSVLAIALVVALLGDMHPGVKS. Positions 23-42 are disordered; the sequence is SSTTSAVTSPSNTTVTSTTS. The Virion surface portion of the chain corresponds to 24-294; the sequence is STTSAVTSPS…KSDPLFEDRL (271 aa). Residues N34, N48, N95, N104, N148, N179, N198, N217, N225, N241, N244, and N260 are each glycosylated (N-linked (GlcNAc...) asparagine; by host). An Ig-like V-type domain is found at 91–190; that stretch reads QVSLNATCKV…TWDLFTYPIY (100 aa). The helical transmembrane segment at 295-317 threads the bilayer; sequence LAYGVLAFLVFMVIILLYVTYML. The Intravirion portion of the chain corresponds to 318–345; the sequence is ARRRDWSYKRLEEPVEEKKHPVPYFKQW.

It is found in the virion membrane. Its function is as follows. Serves as a receptor for the Fc part of human IgG. May thus be involved in interfering with host Ig-mediated immune responses. This Human cytomegalovirus (strain AD169) (HHV-5) protein is Viral Fc-gamma receptor-like protein UL119 (UL119/UL118).